Reading from the N-terminus, the 116-residue chain is MSSTMSFDNLAKVLAVLVAEQGSYTYVDKLGYVPSKDLAVFYLKEALRDLHSIQQKEKFENEKARELVGKIDYERVEKELEDIAKTDERKELREKTSLIAAKALALSAKLGGGSGE.

This is an uncharacterized protein from Archaeoglobus fulgidus (strain ATCC 49558 / DSM 4304 / JCM 9628 / NBRC 100126 / VC-16).